The chain runs to 245 residues: Flavin-dependent thymidylate synthase (245 aa).

In terms of domain architecture, ThyX spans 6-220; that stretch reads PRVELLAHTP…PELFAHAGAK (215 aa). FAD-binding positions include S65, 89–91, and Q97; that span reads RHR. DUMP is bound by residues 86 to 89, 97 to 101, and R159; these read QLVR and QQSQR. Positions 89 to 99 match the ThyX motif motif; sequence RHRIASFSQQS. Residues 175-177 and H181 each bind FAD; that span reads NCR. A dUMP-binding site is contributed by R186. The active-site Involved in ionization of N3 of dUMP, leading to its activation is the R186.

Belongs to the thymidylate synthase ThyX family. As to quaternary structure, homotetramer. Requires FAD as cofactor.

It carries out the reaction dUMP + (6R)-5,10-methylene-5,6,7,8-tetrahydrofolate + NADPH + H(+) = dTMP + (6S)-5,6,7,8-tetrahydrofolate + NADP(+). It functions in the pathway pyrimidine metabolism; dTTP biosynthesis. Its function is as follows. Catalyzes the reductive methylation of 2'-deoxyuridine-5'-monophosphate (dUMP) to 2'-deoxythymidine-5'-monophosphate (dTMP) while utilizing 5,10-methylenetetrahydrofolate (mTHF) as the methyl donor, and NADPH and FADH(2) as the reductant. The chain is Flavin-dependent thymidylate synthase from Nitratidesulfovibrio vulgaris (strain ATCC 29579 / DSM 644 / CCUG 34227 / NCIMB 8303 / VKM B-1760 / Hildenborough) (Desulfovibrio vulgaris).